We begin with the raw amino-acid sequence, 297 residues long: Phosphatidylglycerol--prolipoprotein diacylglyceryl transferase (297 aa).

The next 4 membrane-spanning stretches (helical) occupy residues 20-40, 57-77, 107-127, and 133-153; these read FITI…GLFI, EILP…YVIF, WEGG…IIFF, and IHLK…QSIG. An a 1,2-diacyl-sn-glycero-3-phospho-(1'-sn-glycerol)-binding site is contributed by Arg-154. A run of 3 helical transmembrane segments spans residues 193 to 213, 225 to 245, and 266 to 286; these read PTFL…ILIF, GFIS…IEGL, and AQFI…FLRL.

The protein belongs to the Lgt family.

The protein localises to the cell inner membrane. The enzyme catalyses L-cysteinyl-[prolipoprotein] + a 1,2-diacyl-sn-glycero-3-phospho-(1'-sn-glycerol) = an S-1,2-diacyl-sn-glyceryl-L-cysteinyl-[prolipoprotein] + sn-glycerol 1-phosphate + H(+). It participates in protein modification; lipoprotein biosynthesis (diacylglyceryl transfer). Catalyzes the transfer of the diacylglyceryl group from phosphatidylglycerol to the sulfhydryl group of the N-terminal cysteine of a prolipoprotein, the first step in the formation of mature lipoproteins. In Prochlorococcus marinus (strain MIT 9301), this protein is Phosphatidylglycerol--prolipoprotein diacylglyceryl transferase.